The chain runs to 89 residues: Small ribosomal subunit protein uS15 (89 aa).

It belongs to the universal ribosomal protein uS15 family. Part of the 30S ribosomal subunit. Forms a bridge to the 50S subunit in the 70S ribosome, contacting the 23S rRNA.

Functionally, one of the primary rRNA binding proteins, it binds directly to 16S rRNA where it helps nucleate assembly of the platform of the 30S subunit by binding and bridging several RNA helices of the 16S rRNA. In terms of biological role, forms an intersubunit bridge (bridge B4) with the 23S rRNA of the 50S subunit in the ribosome. This Brucella abortus (strain S19) protein is Small ribosomal subunit protein uS15.